Consider the following 979-residue polypeptide: Collagen alpha-2(I) chain (979 aa).

The segment at Ser-1 to Ala-979 is disordered. Residues Pro-10, Pro-13, Pro-38, and Pro-44 each carry the 4-hydroxyproline modification. Residues Leu-24–Pro-70 are compositionally biased toward low complexity. Lys-99 bears the 5-hydroxylysine; alternate mark. O-linked (Gal...) hydroxylysine; alternate glycosylation is present at Lys-99. Composition is skewed to low complexity over residues Val-147–Pro-176, Pro-222–Lys-263, Ser-272–Ser-282, and Arg-312–Arg-331. 2 positions are modified to 4-hydroxyproline: Pro-334 and Pro-337. Residues Leu-363–Ala-382 show a composition bias toward low complexity. The span at Gly-427 to Gly-436 shows a compositional bias: gly residues. Low complexity predominate over residues Pro-483–Pro-500. The span at Gly-517 to Gly-527 shows a compositional bias: gly residues. Composition is skewed to low complexity over residues Val-550 to Ser-594 and Val-601 to Ala-621. The span at Lys-622–Lys-631 shows a compositional bias: basic and acidic residues. Over residues Pro-639 to Ala-649 the composition is skewed to low complexity. Over residues Gly-659–Gly-668 the composition is skewed to gly residues. Over residues Ala-669–Thr-679 the composition is skewed to low complexity. The segment covering Gly-710–Gly-724 has biased composition (gly residues). Composition is skewed to low complexity over residues Phe-725 to Pro-759 and Leu-767 to Pro-777. Over residues Gly-778–Arg-788 the composition is skewed to gly residues. The span at Glu-840 to Pro-855 shows a compositional bias: low complexity. Basic and acidic residues predominate over residues Arg-865–Pro-876. Over residues Ser-949–Pro-961 the composition is skewed to pro residues.

Belongs to the fibrillar collagen family. As to quaternary structure, trimers of one alpha 2(I) and two alpha 1(I) chains. Interacts (via C-terminus) with TMEM131 (via PapD-L domain); the interaction is direct and is involved in assembly and TRAPPIII ER-to-Golgi transport complex-dependent secretion of collagen. In terms of processing, prolines at the third position of the tripeptide repeating unit (G-X-Y) are hydroxylated in some or all of the chains. Expressed in bones.

It is found in the secreted. Its subcellular location is the extracellular space. It localises to the extracellular matrix. Its function is as follows. Type I collagen is a member of group I collagen (fibrillar forming collagen). The sequence is that of Collagen alpha-2(I) chain from Bradypus variegatus (Brown-throated three-fingered sloth).